The sequence spans 350 residues: Biotin synthase 1 (350 aa).

Positions 71 to 296 (EEVEVEGIIS…KTILRFAGGR (226 aa)) constitute a Radical SAM core domain. Residues cysteine 86, cysteine 90, and cysteine 93 each coordinate [4Fe-4S] cluster. The [2Fe-2S] cluster site is built by cysteine 129, cysteine 221, and arginine 291.

Belongs to the radical SAM superfamily. Biotin synthase family. In terms of assembly, homodimer. [4Fe-4S] cluster is required as a cofactor. It depends on [2Fe-2S] cluster as a cofactor.

The enzyme catalyses (4R,5S)-dethiobiotin + (sulfur carrier)-SH + 2 reduced [2Fe-2S]-[ferredoxin] + 2 S-adenosyl-L-methionine = (sulfur carrier)-H + biotin + 2 5'-deoxyadenosine + 2 L-methionine + 2 oxidized [2Fe-2S]-[ferredoxin]. The protein operates within cofactor biosynthesis; biotin biosynthesis; biotin from 7,8-diaminononanoate: step 2/2. Its function is as follows. Catalyzes the conversion of dethiobiotin (DTB) to biotin by the insertion of a sulfur atom into dethiobiotin via a radical-based mechanism. The polypeptide is Biotin synthase 1 (Corynebacterium diphtheriae (strain ATCC 700971 / NCTC 13129 / Biotype gravis)).